A 409-amino-acid polypeptide reads, in one-letter code: Inner membrane transport protein YqeG (409 aa).

The Periplasmic portion of the chain corresponds to 1 to 25; it reads MSNIWSKEETLWSFALYGTAVGAGT. A helical transmembrane segment spans residues 26–46; the sequence is LFLPIQLGSAGAVVLFITALV. Topologically, residues 47-87 are cytoplasmic; sequence AWPLTYWPHKALCQFILSSKTSAGEGITGAVTHYYGKKIGN. The chain crosses the membrane as a helical span at residues 88–108; the sequence is LITTLYFIAFFVVVLIYAVAI. The Periplasmic segment spans residues 109–127; it reads TNSLTEQLAKHMVIDLRIR. The chain crosses the membrane as a helical span at residues 128–148; the sequence is MLVSLGVVLILNLIFLMGRHA. At 149–151 the chain is on the cytoplasmic side; it reads TIR. The chain crosses the membrane as a helical span at residues 152–172; the sequence is VMGFLVFPLIAYFLFLSIYLV. The Periplasmic segment spans residues 173-193; the sequence is GSWQPDLLTTQVEFNQNTLHQ. The helical transmembrane segment at 194 to 214 threads the bilayer; the sequence is IWISIPVMVFAFSHTPIISTF. Topologically, residues 215-235 are cytoplasmic; that stretch reads AIDRREKYGEHAMDKCKKIMK. The helical transmembrane segment at 236–256 threads the bilayer; the sequence is VAYLIICISVLFFVFSCLLSI. Residues 257-276 lie on the Periplasmic side of the membrane; that stretch reads PPSYIEAAKEEGVTILSALS. Residues 277-297 traverse the membrane as a helical segment; sequence MLPNAPAWLSISGIIVAVVAM. Residues 298–329 lie on the Cytoplasmic side of the membrane; sequence SKSFLGTYFGVIEGATEVVKTTLQQVGVKKSR. A helical transmembrane segment spans residues 330–350; it reads AFNRALSIMLVSLITFIVCCI. Over 351–353 the chain is Periplasmic; it reads NPN. Residues 354-374 form a helical membrane-spanning segment; that stretch reads AISMIYAISGPLIAMILFIMP. The Cytoplasmic portion of the chain corresponds to 375–388; the sequence is TLSTYLIPALKPWR. The helical transmembrane segment at 389 to 409 threads the bilayer; it reads SIGNLITLIVGILCVSVMFFS.

It belongs to the amino acid/polyamine transporter 2 family. SdaC/TdcC subfamily.

The protein localises to the cell inner membrane. The sequence is that of Inner membrane transport protein YqeG (yqeG) from Escherichia coli O6:H1 (strain CFT073 / ATCC 700928 / UPEC).